Reading from the N-terminus, the 308-residue chain is Oxygen-dependent coproporphyrinogen-III oxidase (308 aa).

Ser-92 serves as a coordination point for substrate. The a divalent metal cation site is built by His-96 and His-106. The Proton donor role is filled by His-106. Asn-108–Arg-110 lines the substrate pocket. Residues His-145 and His-175 each coordinate a divalent metal cation. Positions Tyr-240–Glu-275 are important for dimerization. Position 258-260 (Gly-258–Arg-260) interacts with substrate.

The protein belongs to the aerobic coproporphyrinogen-III oxidase family. Homodimer. It depends on a divalent metal cation as a cofactor.

It localises to the cytoplasm. It carries out the reaction coproporphyrinogen III + O2 + 2 H(+) = protoporphyrinogen IX + 2 CO2 + 2 H2O. It participates in porphyrin-containing compound metabolism; protoporphyrin-IX biosynthesis; protoporphyrinogen-IX from coproporphyrinogen-III (O2 route): step 1/1. Functionally, involved in the heme biosynthesis. Catalyzes the aerobic oxidative decarboxylation of propionate groups of rings A and B of coproporphyrinogen-III to yield the vinyl groups in protoporphyrinogen-IX. This chain is Oxygen-dependent coproporphyrinogen-III oxidase, found in Salmonella paratyphi A (strain ATCC 9150 / SARB42).